The chain runs to 342 residues: L-threonine 3-dehydrogenase (342 aa).

Zn(2+) is bound at residue C38. Catalysis depends on charge relay system residues T40 and H43. The Zn(2+) site is built by H63, E64, C93, C96, C99, and C107. NAD(+)-binding positions include I175, D195, R200, 262 to 264, and 286 to 287; these read LGL and IY.

Belongs to the zinc-containing alcohol dehydrogenase family. As to quaternary structure, homotetramer. The cofactor is Zn(2+).

The protein resides in the cytoplasm. The catalysed reaction is L-threonine + NAD(+) = (2S)-2-amino-3-oxobutanoate + NADH + H(+). It functions in the pathway amino-acid degradation; L-threonine degradation via oxydo-reductase pathway; glycine from L-threonine: step 1/2. Its function is as follows. Catalyzes the NAD(+)-dependent oxidation of L-threonine to 2-amino-3-ketobutyrate. This chain is L-threonine 3-dehydrogenase, found in Streptomyces coelicolor (strain ATCC BAA-471 / A3(2) / M145).